The chain runs to 482 residues: ATP synthase subunit beta (482 aa).

Residue 167–174 coordinates ATP; it reads GGAGVGKT.

This sequence belongs to the ATPase alpha/beta chains family. As to quaternary structure, F-type ATPases have 2 components, CF(1) - the catalytic core - and CF(0) - the membrane proton channel. CF(1) has five subunits: alpha(3), beta(3), gamma(1), delta(1), epsilon(1). CF(0) has three main subunits: a(1), b(2) and c(9-12). The alpha and beta chains form an alternating ring which encloses part of the gamma chain. CF(1) is attached to CF(0) by a central stalk formed by the gamma and epsilon chains, while a peripheral stalk is formed by the delta and b chains.

It localises to the cell membrane. It catalyses the reaction ATP + H2O + 4 H(+)(in) = ADP + phosphate + 5 H(+)(out). Functionally, produces ATP from ADP in the presence of a proton gradient across the membrane. The catalytic sites are hosted primarily by the beta subunits. The polypeptide is ATP synthase subunit beta (Corynebacterium aurimucosum (strain ATCC 700975 / DSM 44827 / CIP 107346 / CN-1) (Corynebacterium nigricans)).